The following is a 506-amino-acid chain: Acetylcholine receptor subunit gamma (506 aa).

An N-terminal signal peptide occupies residues 1 to 17 (MVLTLLLIICLALEVRS). Residues 18–235 (ENEEGRLIEK…IIFFLIIQRK (218 aa)) are Extracellular-facing. A glycan (N-linked (GlcNAc...) asparagine) is linked at Asn-85. A disulfide bridge connects residues Cys-145 and Cys-159. 3 helical membrane passes run 236-260 (PLFY…VYFL), 269-287 (CTLS…FLIA), and 303-324 (YLIF…VLNV). Residues 325 to 466 (SLRTPNTHSL…WVLIGKVIDK (142 aa)) lie on the Cytoplasmic side of the membrane. The residue at position 381 (Tyr-381) is a Phosphotyrosine; by Tyr-kinases. Residues 467 to 490 (ACFWIALLLFSIGTLAIFLTGHFN) traverse the membrane as a helical segment.

The protein belongs to the ligand-gated ion channel (TC 1.A.9) family. Acetylcholine receptor (TC 1.A.9.1) subfamily. Gamma/CHRNG sub-subfamily. As to quaternary structure, pentamer of two alpha chains, and one each of the beta, delta, and gamma chains. In terms of processing, seems not to be glycosylated on Asn-158.

The protein localises to the postsynaptic cell membrane. It is found in the cell membrane. It carries out the reaction K(+)(in) = K(+)(out). The enzyme catalyses Na(+)(in) = Na(+)(out). After binding acetylcholine, the AChR responds by an extensive change in conformation that affects all subunits and leads to opening of an ion-conducting channel across the plasma membrane. This chain is Acetylcholine receptor subunit gamma (CHRNG), found in Tetronarce californica (Pacific electric ray).